The following is a 293-amino-acid chain: Indole-3-glycerol phosphate synthase (293 aa).

This sequence belongs to the TrpC family.

It catalyses the reaction 1-(2-carboxyphenylamino)-1-deoxy-D-ribulose 5-phosphate + H(+) = (1S,2R)-1-C-(indol-3-yl)glycerol 3-phosphate + CO2 + H2O. Its pathway is amino-acid biosynthesis; L-tryptophan biosynthesis; L-tryptophan from chorismate: step 4/5. In Prochlorococcus marinus (strain SARG / CCMP1375 / SS120), this protein is Indole-3-glycerol phosphate synthase.